The following is a 437-amino-acid chain: MSVLLIEAFYGGSHKQLMDLINQEIEGCVLYTLPAKKWHWRARTAALYFMQAILPDDKYRVLFTSSVLNLAELAVLRPDLGKLKKILYFHENQLIYPVQKTQERDFQYGYNQILSCLVADIVVFNSAFNMESFLTSIKTFLKKIPDHRPKNLEEIIRPKCCVLYFPMTFPDISQFLPEHKRVSHTLADNMSSMDISHCPKTSLQAENMSVEFSHDQIQSSIGESSAEQERATISEKNICASGDPVILNASNTLAGDIRQKKPLHIVWPHRWEHDKDPETFFKVLLKLKEKELTFHVSVLGETFTDVPDIFSEARITLGSSVLHWGYLASKDDYLQALCMADVVVSTAKHEFFGVAMLEAVHCGCYPLCPKSLVYPEIFPAVYLYSSPEQLYRKLENFCKRPDVVRRHRFQGDTARFSWAALRGEFRSLLAAEPREDL.

This sequence belongs to the glycosyltransferase group 1 family. Glycosyltransferase 4 subfamily.

It is found in the cytoplasm. Its subcellular location is the nucleus. It carries out the reaction queuosine(34) in tRNA(Asp) + GDP-alpha-D-mannose = O-4''-alpha-D-mannosylqueuosine(34) in tRNA(Asp) + GDP + H(+). In terms of biological role, glycosyltransferase that specifically catalyzes mannosylation of cytoplasmic tRNA(Asp) modified with queuosine at position 34 (queuosine(34)). Mannosylates the cyclopentene moiety of queuosine(34) in tRNA(Asp) to form mannosyl-queuosine(34). Mannosylation of queuosine(34) in tRNA(Asp) is required to slow-down elongation at cognate codons, GAC and GAU, thereby regulating protein translation. The polypeptide is tRNA-queuosine alpha-mannosyltransferase (gtdc1) (Xenopus tropicalis (Western clawed frog)).